We begin with the raw amino-acid sequence, 567 residues long: Glucose-6-phosphate isomerase, cytosolic (567 aa).

Glu360 (proton donor) is an active-site residue. Residues His391 and Lys516 contribute to the active site.

This sequence belongs to the GPI family. Homodimer.

It localises to the cytoplasm. The enzyme catalyses alpha-D-glucose 6-phosphate = beta-D-fructose 6-phosphate. The protein operates within carbohydrate degradation; glycolysis; D-glyceraldehyde 3-phosphate and glycerone phosphate from D-glucose: step 2/4. This is Glucose-6-phosphate isomerase, cytosolic (PHI1) from Zea mays (Maize).